The following is a 55-amino-acid chain: MAKSQDVRPVIKLRSTGGTGYTYVTRKNRRNDPDRMVVRKYDPVLRRHVDFREER.

This sequence belongs to the bacterial ribosomal protein bL33 family.

The polypeptide is Large ribosomal subunit protein bL33B (Kineococcus radiotolerans (strain ATCC BAA-149 / DSM 14245 / SRS30216)).